We begin with the raw amino-acid sequence, 144 residues long: Large ribosomal subunit protein uL15 (144 aa).

Positions 1 to 53 are disordered; that stretch reads MRLNTLSPAEGAKHAPKRLGRGIGSGLGKTGGRGHKGQKSRSGGGVRRGFEGG. The span at 21–31 shows a compositional bias: gly residues; the sequence is RGIGSGLGKTG.

The protein belongs to the universal ribosomal protein uL15 family. As to quaternary structure, part of the 50S ribosomal subunit.

Binds to the 23S rRNA. The sequence is that of Large ribosomal subunit protein uL15 from Pectobacterium carotovorum subsp. carotovorum (strain PC1).